Reading from the N-terminus, the 553-residue chain is Arginine--tRNA ligase (553 aa).

Positions 130 to 140 match the 'HIGH' region motif; the sequence is ANPTGPVHLGG.

It belongs to the class-I aminoacyl-tRNA synthetase family. As to quaternary structure, monomer.

It localises to the cytoplasm. The catalysed reaction is tRNA(Arg) + L-arginine + ATP = L-arginyl-tRNA(Arg) + AMP + diphosphate. This is Arginine--tRNA ligase from Saccharopolyspora erythraea (strain ATCC 11635 / DSM 40517 / JCM 4748 / NBRC 13426 / NCIMB 8594 / NRRL 2338).